Consider the following 92-residue polypeptide: Cell division protein FtsB (92 aa).

The Cytoplasmic segment spans residues 1–3 (MRL). A helical transmembrane segment spans residues 4 to 21 (LILILLSVLVLFQHDFWF). Over 22–92 (GSNGFLDYRQ…VFYHIVKESK (71 aa)) the chain is Periplasmic. Residues 28 to 63 (DYRQNAEKIKENQAENEKLSQRNQRINAEIQGLTKG) are a coiled coil.

This sequence belongs to the FtsB family. As to quaternary structure, part of a complex composed of FtsB, FtsL and FtsQ.

It is found in the cell inner membrane. Its function is as follows. Essential cell division protein. May link together the upstream cell division proteins, which are predominantly cytoplasmic, with the downstream cell division proteins, which are predominantly periplasmic. The protein is Cell division protein FtsB of Haemophilus influenzae (strain PittEE).